The sequence spans 180 residues: MTASAPRRPAAFLDRDGVINYNDHYVGTRERLRWMPGIAAAIRQLNAAGYYVFIITNQSGVARGMFSEDDVRALHRWMLDELNTQGARIDDVRFCPHHVEGTLDAYRVACEHRKPGPGMILDLAKTWPVDMTRSFVIGDSASDVEAAKAAGIPGFRFEGEDIDVFVKQVLIEMQRAAVSN.

Catalysis depends on Asp-14, which acts as the Nucleophile. Asp-14 and Asp-16 together coordinate Mg(2+). Residues 14-16 (DRD), 22-25 (NDHY), and 56-59 (TNQS) each bind substrate. The Proton donor role is filled by Asp-16. 4 residues coordinate Zn(2+): Cys-95, His-97, Cys-110, and His-112. 113–114 (RK) contributes to the substrate binding site. Asp-139 serves as a coordination point for Mg(2+).

Belongs to the gmhB family. In terms of assembly, monomer. The cofactor is Mg(2+).

It localises to the cytoplasm. The catalysed reaction is D-glycero-beta-D-manno-heptose 1,7-bisphosphate + H2O = D-glycero-beta-D-manno-heptose 1-phosphate + phosphate. It participates in nucleotide-sugar biosynthesis; ADP-L-glycero-beta-D-manno-heptose biosynthesis; ADP-L-glycero-beta-D-manno-heptose from D-glycero-beta-D-manno-heptose 7-phosphate: step 2/4. Its pathway is bacterial outer membrane biogenesis; LPS core biosynthesis. Functionally, converts the D-glycero-beta-D-manno-heptose 1,7-bisphosphate (beta-HBP) intermediate into D-glycero-beta-D-manno-heptose 1-phosphate by removing the phosphate group at the C-7 position. Also catalyzes the dephosphorylation of D-glycero-alpha-D-manno-heptose 1,7-bisphosphate in vitro. This Rhodopseudomonas palustris (strain ATCC BAA-98 / CGA009) protein is D-glycero-beta-D-manno-heptose-1,7-bisphosphate 7-phosphatase.